The following is a 271-amino-acid chain: Ribosomal RNA small subunit methyltransferase A (271 aa).

S-adenosyl-L-methionine contacts are provided by N18, L20, G45, E66, D91, and N112.

The protein belongs to the class I-like SAM-binding methyltransferase superfamily. rRNA adenine N(6)-methyltransferase family. RsmA subfamily.

The protein resides in the cytoplasm. It catalyses the reaction adenosine(1518)/adenosine(1519) in 16S rRNA + 4 S-adenosyl-L-methionine = N(6)-dimethyladenosine(1518)/N(6)-dimethyladenosine(1519) in 16S rRNA + 4 S-adenosyl-L-homocysteine + 4 H(+). Functionally, specifically dimethylates two adjacent adenosines (A1518 and A1519) in the loop of a conserved hairpin near the 3'-end of 16S rRNA in the 30S particle. May play a critical role in biogenesis of 30S subunits. This chain is Ribosomal RNA small subunit methyltransferase A, found in Vibrio cholerae serotype O1 (strain ATCC 39315 / El Tor Inaba N16961).